The primary structure comprises 671 residues: Phosphoenolpyruvate carboxykinase (ATP) 1 (671 aa).

Low complexity predominate over residues 1 to 10 (MSAGNGNATN). The tract at residues 1 to 44 (MSAGNGNATNGDGGFSFPKGPVMPKITTGAAKRGSGVCHDDSGP) is disordered. At Ser2 the chain carries N-acetylserine. A Phosphoserine modification is found at Ser62. Thr66 carries the phosphothreonine modification. The tract at residues 100–127 (TRESGPKVVRGDPAEKKTDGSTTPAYAH) is disordered. Basic and acidic residues predominate over residues 108-118 (VRGDPAEKKTD). Arg189 contributes to the substrate binding site. The Ca(2+) site is built by His270 and Asn271. Residues Tyr328 and Lys334 each coordinate substrate. ATP contacts are provided by residues Lys334, His353, and 369 to 377 (GLSGTGKTT). 2 residues coordinate Mn(2+): Lys334 and His353. Asp390 is a Mn(2+) binding site. Residue Gly404 participates in Ca(2+) binding. ATP is bound by residues Glu418, Arg455, 574–575 (RI), Ile575, and Thr580. Arg455 serves as a coordination point for substrate.

Belongs to the phosphoenolpyruvate carboxykinase (ATP) family. Monomer. Mn(2+) serves as cofactor. As to expression, expressed in cotyledons, flowers, siliques, seeds, leaves, stems and roots. Localized in mid-veins.

It localises to the cytoplasm. It carries out the reaction oxaloacetate + ATP = phosphoenolpyruvate + ADP + CO2. Its pathway is carbohydrate biosynthesis; gluconeogenesis. With respect to regulation, allosterically activated by calcium. It may represent the only case of a monomeric, allosteric enzyme. Functionally, involved in the gluconeogenesis. Catalyzes the conversion of oxaloacetate (OAA) to phosphoenolpyruvate (PEP) through direct phosphoryl transfer between the nucleoside triphosphate and OAA. The chain is Phosphoenolpyruvate carboxykinase (ATP) 1 from Arabidopsis thaliana (Mouse-ear cress).